The sequence spans 654 residues: Endoplasmic reticulum chaperone BiP (654 aa).

A signal peptide spans 1-18 (MKFPMVAAALLLLCAVRA). Residues 1-80 (MKFPMVAAAL…EGERLIGDAA (80 aa)) are required for interaction with ELAPOR1. 36-39 (GTTY) provides a ligand contact to ATP. S86 bears the Phosphoserine mark. K96 contacts ATP. K125 is modified (N6-acetyllysine). The segment at 125 to 280 (KPYIQVDIGG…KKKTGKDVRK (156 aa)) is nucleotide-binding (NBD). Residue Y160 is modified to 3'-nitrotyrosine. At K213 the chain carries N6-acetyllysine. 227–229 (GGT) lines the ATP pocket. K271 is subject to N6-acetyllysine. 293–300 (EKAKRALS) contacts ATP. Position 326 is an N6-acetyllysine (K326). A Glycyl lysine isopeptide (Lys-Gly) (interchain with G-Cter in SUMO2) cross-link involves residue K352. K353 carries the post-translational modification N6-acetyllysine; alternate. A Glycyl lysine isopeptide (Lys-Gly) (interchain with G-Cter in SUMO1); alternate cross-link involves residue K353. ATP is bound at residue 364-367 (GSTR). Residues 409-419 (QDTGDLVLLDV) form an interdomain linker region. The interval 420-500 (CPLTLGIETV…PRGVPQIEVT (81 aa)) is substrate-binding (SBD). K447 carries the N6-succinyllysine modification. Position 492 is an omega-N-methylarginine (R492). T518 carries the post-translational modification O-AMP-threonine; alternate. Residue T518 is modified to Phosphothreonine; alternate. The residue at position 585 (K585) is an N6,N6,N6-trimethyllysine; by METTL21A; in vitro. Position 585 is an N6,N6-dimethyllysine; alternate (K585). K585 is modified (N6-methyllysine; alternate). K591 is modified (N6-methyllysine). The segment at 632–654 (SKLYGSAGPPPTGEEDTSEKDEL) is disordered. Phosphothreonine is present on residues T643 and T648. The span at 644–654 (GEEDTSEKDEL) shows a compositional bias: acidic residues. S649 carries the phosphoserine modification. Residues 651–654 (KDEL) carry the Prevents secretion from ER motif.

This sequence belongs to the heat shock protein 70 family. As to quaternary structure, monomer and homooligomer; homooligomerization via the interdomain linker inactivates the chaperone activity and acts as a storage of HSPA5/BiP molecules. Interacts with DNAJC1 (via J domain). Component of an EIF2 complex at least composed of CELF1/CUGBP1, CALR, CALR3, EIF2S1, EIF2S2, HSP90B1 and HSPA5. Part of a large chaperone multiprotein complex comprising DNAJB11, HSP90B1, HSPA5, HYOU, PDIA2, PDIA4, PDIA6, PPIB, SDF2L1, UGGT1 and very small amounts of ERP29, but not, or at very low levels, CALR nor CANX. Interacts with TMEM132A and TRIM21. May form a complex with ERLEC1, OS9, SEL1L and SYVN1. Interacts with DNAJC10. Interacts with DNAJB9/ERdj4; leading to recruit HSPA5/BiP to ERN1/IRE1. Interacts with ERN1/IRE1 (via luminal domain); the interaction takes place following interaction with DNAJB9/ERdj4 and leads to inactivate ERN1/IRE1, the interaction also competitively inhibits ERN1 interaction with MANF. Interacts directly with MANF (via SAP domain); the interaction inhibits ATP binding to HSPA5/BiP and subsequent nucleotide exchange. Interacts with EIF2AK3/PERK (via luminal domain); interaction leads to inactivate EIF2AK3/PERK. Interacts with MX1. Interacts with METTL23. Interacts with CEMIP; the interaction induces calcium leakage from the endoplasmic reticulum and cell migration. Interacts with PCSK4 form; the interaction takes place in the endoplasmic reticulum. Interacts with CIPC. Interacts with CCDC88B (via C-terminus); the interaction opposes ERN1-mediated JNK activation, protecting against apoptosis. Interacts with INPP5K; necessary for INPP5K localization at the endoplasmic reticulum. Interacts with LOXL2; leading to activate the ERN1/IRE1-XBP1 pathway of the unfolded protein response. Interacts with CLU under stressed condition; interaction increases CLU protein stability; facilitates its retrotranslocation and redistribution to the mitochondria; cooperatively suppress stress-induced apoptosis by stabilizing mitochondrial membrane integrity. Interacts with CCDC47. Interacts with CLN3. Interacts with ELAPOR1; may regulate the function of HSPA5 in apoptosis and cell proliferation. Interacts with CASP7. Interacts with ILDR2; the interaction stabilizes ILDR2 expression. Interacts with ADAM7. Post-translationally, in unstressed cells, AMPylation at Thr-518 by FICD inactivates the chaperome activity: AMPylated form is locked in a relatively inert state and only weakly stimulated by J domain-containing proteins. In response to endoplasmic reticulum stress, de-AMPylation by the same protein, FICD, restores the chaperone activity.

It is found in the endoplasmic reticulum lumen. Its subcellular location is the melanosome. The protein resides in the cytoplasm. It localises to the cell surface. It catalyses the reaction ATP + H2O = ADP + phosphate + H(+). Its activity is regulated as follows. The chaperone activity is regulated by ATP-induced allosteric coupling of the nucleotide-binding (NBD) and substrate-binding (SBD) domains. In the ADP-bound and nucleotide-free (apo) states, the two domains have little interaction. In contrast, in the ATP-bound state the two domains are tightly coupled, which results in drastically accelerated kinetics in both binding and release of polypeptide substrates. J domain-containing co-chaperones (DNAJB9/ERdj4 or DNAJC10/ERdj5) stimulate the ATPase activity and are required for efficient substrate recognition by HSPA5/BiP. Homooligomerization inactivates participating HSPA5/BiP protomers and probably act as reservoirs to store HSPA5/BiP molecules when they are not needed by the cell. Functionally, endoplasmic reticulum chaperone that plays a key role in protein folding and quality control in the endoplasmic reticulum lumen. Involved in the correct folding of proteins and degradation of misfolded proteins via its interaction with DNAJC10/ERdj5, probably to facilitate the release of DNAJC10/ERdj5 from its substrate. Acts as a key repressor of the EIF2AK3/PERK and ERN1/IRE1-mediated unfolded protein response (UPR). In the unstressed endoplasmic reticulum, recruited by DNAJB9/ERdj4 to the luminal region of ERN1/IRE1, leading to disrupt the dimerization of ERN1/IRE1, thereby inactivating ERN1/IRE1. Also binds and inactivates EIF2AK3/PERK in unstressed cells. Accumulation of misfolded protein in the endoplasmic reticulum causes release of HSPA5/BiP from ERN1/IRE1 and EIF2AK3/PERK, allowing their homodimerization and subsequent activation. Plays an auxiliary role in post-translational transport of small presecretory proteins across endoplasmic reticulum (ER). May function as an allosteric modulator for SEC61 channel-forming translocon complex, likely cooperating with SEC62 to enable the productive insertion of these precursors into SEC61 channel. Appears to specifically regulate translocation of precursors having inhibitory residues in their mature region that weaken channel gating. May also play a role in apoptosis and cell proliferation. The protein is Endoplasmic reticulum chaperone BiP of Cricetulus griseus (Chinese hamster).